The sequence spans 492 residues: E3 ubiquitin-protein ligase ARIH2 (492 aa).

A compositionally biased stretch (polar residues) spans 1 to 11 (MSVDMNSQGSD). The disordered stretch occupies residues 1–37 (MSVDMNSQGSDSNEEDYDPNCEEEEEEEEDPGDIEDY). Positions 12-36 (SNEEDYDPNCEEEEEEEEDPGDIED) are enriched in acidic residues. The segment at 64 to 111 (TYKESEGALHEHMTSLASVLKVSHSVAKLILVNFHWQVSEILDRYRSN) is UBA-like. The segment at 134–343 (PPHHCAVCMQ…SEYYECSRYK (210 aa)) is TRIAD supradomain. 18 residues coordinate Zn(2+): cysteine 138, cysteine 141, cysteine 155, histidine 157, cysteine 160, cysteine 163, cysteine 182, cysteine 187, cysteine 227, cysteine 232, cysteine 248, cysteine 251, cysteine 256, cysteine 259, histidine 264, cysteine 269, cysteine 296, and cysteine 299. An RING-type 1 zinc finger spans residues 138 to 187 (CAVCMQFVRKENLLSLACQHQFCRSCWEQHCSVLVKDGVGVGISCMAQDC). An IBR-type zinc finger spans residues 207–269 (DKYRRYLFRD…RQMYHAPTDC (63 aa)). The RING-type 2; atypical zinc finger occupies 296-325 (CPKCNICIEKNGGCNHMQCSKCKHDFCWMC). Residue cysteine 309 is part of the active site. Residues cysteine 314, cysteine 317, cysteine 322, cysteine 325, histidine 332, and cysteine 339 each coordinate Zn(2+). Serine 352 carries the phosphoserine modification. The ariadne domain stretch occupies residues 358 to 492 (REALKKYLFY…RTLLKDFHDT (135 aa)).

The protein belongs to the RBR family. Ariadne subfamily. As to quaternary structure, interacts (via RING-type zinc finger 1) with UBE2L3. Interacts (via RING-type zinc finger 2) with UBE2N. Interacts with neddylated CUL5. Interacts (via RING-type 2) with GFI1B. Interacts with GFI1; prevents its ubiquitination and proteasomal degradation. Interacts with DCUN1D1 (via UBA-like domain); promotes DCUN1D1 ubiquitination. Post-translationally, ubiquitinated. Ubiquitination promotes proteasomal degradation.

It localises to the nucleus. It is found in the cytoplasm. The enzyme catalyses [E2 ubiquitin-conjugating enzyme]-S-ubiquitinyl-L-cysteine + [acceptor protein]-L-lysine = [E2 ubiquitin-conjugating enzyme]-L-cysteine + [acceptor protein]-N(6)-ubiquitinyl-L-lysine.. The protein operates within protein modification; protein ubiquitination. Autoinhibited by the ariadne domain, which masks the second RING-type zinc finger that contains the active site and inhibits the E3 activity. Inhibition is relieved upon binding to neddylated cullin-RING ubiquitin ligase complexes, which activate the E3 ligase activity of ARIH1. Functionally, E3 ubiquitin-protein ligase, which catalyzes ubiquitination of target proteins together with ubiquitin-conjugating enzyme E2 UBE2L3. Acts as an atypical E3 ubiquitin-protein ligase by working together with cullin-5-RING ubiquitin ligase complex (ECS complex, also named CRL5 complex) and initiating ubiquitination of ECS substrates: associates with ECS complex and specifically mediates addition of the first ubiquitin on ECS targets. The initial ubiquitin is then elongated. E3 ubiquitin-protein ligase activity is activated upon binding to neddylated form of the ECS complex. Mediates 'Lys-6', 'Lys-48'- and 'Lys-63'-linked polyubiquitination. May play a role in myelopoiesis. This chain is E3 ubiquitin-protein ligase ARIH2 (Arih2), found in Mus musculus (Mouse).